The primary structure comprises 262 residues: Cytochrome c oxidase subunit 3 (262 aa).

The next 7 membrane-spanning stretches (helical) occupy residues 16 to 36, 39 to 59, 83 to 103, 128 to 148, 160 to 180, 198 to 218, and 241 to 261; these read PWPY…VVYF, SQTW…IVWW, GMLL…WAFF, FSVP…VTWA, AING…LQAM, FFVA…FLAV, and WYWH…YWWG.

Belongs to the cytochrome c oxidase subunit 3 family. Component of the cytochrome c oxidase (complex IV, CIV), a multisubunit enzyme composed of a catalytic core of 3 subunits and several supernumerary subunits. The complex exists as a monomer or a dimer and forms supercomplexes (SCs) in the inner mitochondrial membrane with ubiquinol-cytochrome c oxidoreductase (cytochrome b-c1 complex, complex III, CIII).

The protein resides in the mitochondrion inner membrane. The catalysed reaction is 4 Fe(II)-[cytochrome c] + O2 + 8 H(+)(in) = 4 Fe(III)-[cytochrome c] + 2 H2O + 4 H(+)(out). In terms of biological role, component of the cytochrome c oxidase, the last enzyme in the mitochondrial electron transport chain which drives oxidative phosphorylation. The respiratory chain contains 3 multisubunit complexes succinate dehydrogenase (complex II, CII), ubiquinol-cytochrome c oxidoreductase (cytochrome b-c1 complex, complex III, CIII) and cytochrome c oxidase (complex IV, CIV), that cooperate to transfer electrons derived from NADH and succinate to molecular oxygen, creating an electrochemical gradient over the inner membrane that drives transmembrane transport and the ATP synthase. Cytochrome c oxidase is the component of the respiratory chain that catalyzes the reduction of oxygen to water. Electrons originating from reduced cytochrome c in the intermembrane space (IMS) are transferred via the dinuclear copper A center (CU(A)) of subunit 2 and heme A of subunit 1 to the active site in subunit 1, a binuclear center (BNC) formed by heme A3 and copper B (CU(B)). The BNC reduces molecular oxygen to 2 water molecules using 4 electrons from cytochrome c in the IMS and 4 protons from the mitochondrial matrix. The polypeptide is Cytochrome c oxidase subunit 3 (COIII) (Metridium senile (Brown sea anemone)).